We begin with the raw amino-acid sequence, 76 residues long: Exodeoxyribonuclease 7 small subunit (76 aa).

The protein belongs to the XseB family. Heterooligomer composed of large and small subunits.

It is found in the cytoplasm. It catalyses the reaction Exonucleolytic cleavage in either 5'- to 3'- or 3'- to 5'-direction to yield nucleoside 5'-phosphates.. Its function is as follows. Bidirectionally degrades single-stranded DNA into large acid-insoluble oligonucleotides, which are then degraded further into small acid-soluble oligonucleotides. In Methylococcus capsulatus (strain ATCC 33009 / NCIMB 11132 / Bath), this protein is Exodeoxyribonuclease 7 small subunit.